The primary structure comprises 460 residues: Photosystem II CP43 reaction center protein (460 aa).

A propeptide is located at residue methionine 1. 5 consecutive transmembrane segments (helical) span residues 56–80, 121–142, 165–187, 242–262, and 278–299; these read LFETSHFIPEKPLYEQGMILLPHLA, IVGPDVLEDSFSFFGYDWRDKN, KALFIGGIYDTWAPGGGDIRFIT, RPFSWARRAFVWSGEAYLSYS, and WYNNTVYPSEFYGPTAAEASQA. Glutamate 354 lines the [CaMn4O5] cluster pocket. Residues 434–458 traverse the membrane as a helical segment; the sequence is RARAAAAGFEKGINRENEPVLSMRP.

This sequence belongs to the PsbB/PsbC family. PsbC subfamily. As to quaternary structure, PSII is composed of 1 copy each of membrane proteins PsbA, PsbB, PsbC, PsbD, PsbE, PsbF, PsbH, PsbI, PsbJ, PsbK, PsbL, PsbM, PsbT, PsbY, PsbZ, Psb30/Ycf12, at least 3 peripheral proteins of the oxygen-evolving complex and a large number of cofactors. It forms dimeric complexes. Binds multiple chlorophylls and provides some of the ligands for the Ca-4Mn-5O cluster of the oxygen-evolving complex. It may also provide a ligand for a Cl- that is required for oxygen evolution. PSII binds additional chlorophylls, carotenoids and specific lipids. serves as cofactor.

The protein resides in the plastid. It is found in the chloroplast thylakoid membrane. Its function is as follows. One of the components of the core complex of photosystem II (PSII). It binds chlorophyll and helps catalyze the primary light-induced photochemical processes of PSII. PSII is a light-driven water:plastoquinone oxidoreductase, using light energy to abstract electrons from H(2)O, generating O(2) and a proton gradient subsequently used for ATP formation. The chain is Photosystem II CP43 reaction center protein from Cyanidium caldarium (Red alga).